We begin with the raw amino-acid sequence, 835 residues long: Protein bicaudal D homolog 1 (835 aa).

Residues 1–264 (MAAEEALKTV…YINLSDSHIS (264 aa)) are a coiled coil. The interval 278-297 (EPNNDDKMNGHIHGPLGKLN) is disordered. Residues 320–519 (ELNISEIQKL…TFSEELAQLY (200 aa)) adopt a coiled-coil conformation. Disordered regions lie at residues 545–616 (RSGS…LDTS) and 800–835 (DHEQSRRSKGKLGKSKIGSPKIVSSLLPPYRHSAHN). Low complexity predominate over residues 557-572 (GLLSPRLSRRGVSSPV). Residues 581–590 (VSKENTETSK) are compositionally biased toward basic and acidic residues. Over residues 591–604 (EPSPTKTPTISPVI) the composition is skewed to low complexity. A coiled-coil region spans residues 663-803 (IDKDKEALME…LEDLEFDHEQ (141 aa)). The interval 663–803 (IDKDKEALME…LEDLEFDHEQ (141 aa)) is interaction with RAB6A.

It belongs to the BicD family. In terms of assembly, interacts with RAB6A. Interacts (via C-terminus) with RAB6B (GTP-bound); the interaction is direct. Interacts with CLIP-115 and KIFC2. As to expression, expressed in the brain, heart and skeletal muscle.

The protein localises to the golgi apparatus. Regulates coat complex coatomer protein I (COPI)-independent Golgi-endoplasmic reticulum transport by recruiting the dynein-dynactin motor complex. This Mus musculus (Mouse) protein is Protein bicaudal D homolog 1 (Bicd1).